A 201-amino-acid polypeptide reads, in one-letter code: MCAARLAAAAAQSVYAFSARPLAGGEPVSLGSLRGKVLLIENVASLUGTTVRDYTQMNELQRRLGPRGLVVLGFPCNQFGHQENAKNEEILNSLKYVRPGGGFEPNFMLFEKCEVNGAGAHPLFAFLREALPAPSDDATALMTDPKLIAWSPVCRNDVAWNFEKFLVGPDGVPVRRYSRRFQTIDIEPDIEALLSQGPSSA.

Serine 32 carries the post-translational modification Phosphoserine. Selenocysteine 47 is an active-site residue. A non-standard amino acid (selenocysteine) is located at residue selenocysteine 47. N6-acetyllysine; alternate is present on residues lysine 86, lysine 112, and lysine 146. 3 positions are modified to N6-succinyllysine; alternate: lysine 86, lysine 112, and lysine 146. Phosphoserine is present on residues serine 195 and serine 199.

Belongs to the glutathione peroxidase family. Homotetramer. Interacts with MIEN1. Post-translationally, during periods of oxidative stress, Sec-47 may react with a superoxide radical, irreversibly lose hydroselenide and be converted to dehydroalanine.

The protein localises to the cytoplasm. It localises to the mitochondrion. The catalysed reaction is 2 glutathione + H2O2 = glutathione disulfide + 2 H2O. It carries out the reaction a hydroperoxy polyunsaturated fatty acid + 2 glutathione = a hydroxy polyunsaturated fatty acid + glutathione disulfide + H2O. It catalyses the reaction tert-butyl hydroperoxide + 2 glutathione = tert-butanol + glutathione disulfide + H2O. The enzyme catalyses cumene hydroperoxide + 2 glutathione = 2-phenylpropan-2-ol + glutathione disulfide + H2O. The catalysed reaction is (13S)-hydroperoxy-(9Z,11E)-octadecadienoate + 2 glutathione = (13S)-hydroxy-(9Z,11E)-octadecadienoate + glutathione disulfide + H2O. It carries out the reaction (9S)-hydroperoxy-(10E,12Z)-octadecadienoate + 2 glutathione = (9S)-hydroxy-(10E,12Z)-octadecadienoate + glutathione disulfide + H2O. It catalyses the reaction (5S)-hydroperoxy-(6E,8Z,11Z,14Z)-eicosatetraenoate + 2 glutathione = (5S)-hydroxy-(6E,8Z,11Z,14Z)-eicosatetraenoate + glutathione disulfide + H2O. The enzyme catalyses (12S)-hydroperoxy-(5Z,8Z,10E,14Z)-eicosatetraenoate + 2 glutathione = (12S)-hydroxy-(5Z,8Z,10E,14Z)-eicosatetraenoate + glutathione disulfide + H2O. The catalysed reaction is (12R)-hydroperoxy-(5Z,8Z,10E,14Z)-eicosatetraenoate + 2 glutathione = (12R)-hydroxy-(5Z,8Z,10E,14Z)-eicosatetraenoate + glutathione disulfide + H2O. It carries out the reaction (15S)-hydroperoxy-(5Z,8Z,11Z,13E)-eicosatetraenoate + 2 glutathione = (15S)-hydroxy-(5Z,8Z,11Z,13E)-eicosatetraenoate + glutathione disulfide + H2O. It catalyses the reaction (5S)-hydroperoxy-(6E,8Z,11Z,14Z,17Z)-eicosapentaenoate + 2 glutathione = (5S)-hydroxy-(6E,8Z,11Z,14Z,17Z)-eicosapentaenoate + glutathione disulfide + H2O. The enzyme catalyses (12S)-hydroperoxy-(5Z,8Z,10E,14Z,17Z)-eicosapentaenoate + 2 glutathione = (12S)-hydroxy-(5Z,8Z,10E,14Z,17Z)-eicosapentaenoate + glutathione disulfide + H2O. The catalysed reaction is (15S)-hydroperoxy-(5Z,8Z,11Z,13E,17Z)-eicosapentaenoate + 2 glutathione = (15S)-hydroxy-(5Z,8Z,11Z,13E,17Z)-eicosapentaenoate + glutathione disulfide + H2O. It carries out the reaction (15S)-hydroperoxy-(11Z,13E)-eicosadienoate + 2 glutathione = (15S)-hydroxy-(11Z,13E)-eicosadienoate + glutathione disulfide + H2O. It catalyses the reaction (17S)-hydroperoxy-(4Z,7Z,10Z,13Z,15E,19Z)-docosahexaenoate + 2 glutathione = (17S)-hydroxy-(4Z,7Z,10Z,13Z,15E,19Z)-docosahexaenoate + glutathione disulfide + H2O. Its function is as follows. Catalyzes the reduction of hydroperoxides in a glutathione-dependent manner thus regulating cellular redox homeostasis. Can reduce small soluble hydroperoxides such as H2O2, cumene hydroperoxide and tert-butyl hydroperoxide, as well as several fatty acid-derived hydroperoxides. In platelets catalyzes the reduction of 12-hydroperoxyeicosatetraenoic acid, the primary product of the arachidonate 12-lipoxygenase pathway. The protein is Glutathione peroxidase 1 (GPX1) of Macaca fuscata fuscata (Japanese macaque).